We begin with the raw amino-acid sequence, 248 residues long: 3-deoxy-manno-octulosonate cytidylyltransferase (248 aa).

This sequence belongs to the KdsB family.

The protein localises to the cytoplasm. It catalyses the reaction 3-deoxy-alpha-D-manno-oct-2-ulosonate + CTP = CMP-3-deoxy-beta-D-manno-octulosonate + diphosphate. The protein operates within nucleotide-sugar biosynthesis; CMP-3-deoxy-D-manno-octulosonate biosynthesis; CMP-3-deoxy-D-manno-octulosonate from 3-deoxy-D-manno-octulosonate and CTP: step 1/1. Its pathway is bacterial outer membrane biogenesis; lipopolysaccharide biosynthesis. Its function is as follows. Activates KDO (a required 8-carbon sugar) for incorporation into bacterial lipopolysaccharide in Gram-negative bacteria. The chain is 3-deoxy-manno-octulosonate cytidylyltransferase from Chlorobaculum tepidum (strain ATCC 49652 / DSM 12025 / NBRC 103806 / TLS) (Chlorobium tepidum).